We begin with the raw amino-acid sequence, 151 residues long: Small ribosomal subunit protein uS15 (151 aa).

The protein belongs to the universal ribosomal protein uS15 family.

The protein is Small ribosomal subunit protein uS15 (RPS13) of Wuchereria bancrofti.